The following is a 631-amino-acid chain: Chaperone protein DnaK (631 aa).

Position 197 is a phosphothreonine; by autocatalysis (Thr197). The interval Ala599–Lys631 is disordered. Over residues Ala603–Glu612 the composition is skewed to low complexity.

Belongs to the heat shock protein 70 family.

Acts as a chaperone. The chain is Chaperone protein DnaK from Rickettsia bellii (strain RML369-C).